The primary structure comprises 673 residues: DNA ligase (673 aa).

NAD(+) contacts are provided by residues 33-37 (DAEYD), 82-83 (SL), and Glu115. The active-site N6-AMP-lysine intermediate is the Lys117. NAD(+) contacts are provided by Arg138, Glu175, Lys292, and Lys316. Cys410, Cys413, Cys428, and Cys434 together coordinate Zn(2+). The BRCT domain occupies 593–673 (VGDNPFKEKT…TFLAWSKPYL (81 aa)).

The protein belongs to the NAD-dependent DNA ligase family. LigA subfamily. Mg(2+) serves as cofactor. Requires Mn(2+) as cofactor.

It carries out the reaction NAD(+) + (deoxyribonucleotide)n-3'-hydroxyl + 5'-phospho-(deoxyribonucleotide)m = (deoxyribonucleotide)n+m + AMP + beta-nicotinamide D-nucleotide.. DNA ligase that catalyzes the formation of phosphodiester linkages between 5'-phosphoryl and 3'-hydroxyl groups in double-stranded DNA using NAD as a coenzyme and as the energy source for the reaction. It is essential for DNA replication and repair of damaged DNA. This is DNA ligase from Pasteurella multocida (strain Pm70).